The sequence spans 3106 residues: Cilia- and flagella-associated protein 54 (3106 aa).

Composition is skewed to low complexity over residues 1 to 24 (MASS…VSPV), 34 to 48 (STAV…KSSS), and 2356 to 2368 (ESCS…TSTT). Disordered stretches follow at residues 1 to 58 (MASS…THSE) and 2354 to 2374 (PEES…KDDS).

Belongs to the CFAP54 family. As to expression, expressed at high level in the testis and at a low level in the lung and brain.

The protein localises to the cytoplasm. It is found in the cytoskeleton. It localises to the cilium axoneme. Functionally, required for assembly and function of cilia and flagella. The polypeptide is Cilia- and flagella-associated protein 54 (Mus musculus (Mouse)).